A 349-amino-acid polypeptide reads, in one-letter code: Small ribosomal subunit biogenesis GTPase RsgA (349 aa).

The disordered stretch occupies residues 1–38 (MSKNKLSKGQERRVQANHQRRLKRTDNKPELDDSQLGE). A CP-type G domain is found at 102–272 (TSVLNRPDIY…VIDSPGVREF (171 aa)). Residues 158-161 (NKID) and 212-220 (GQSGVGKSS) each bind GTP. Residues cysteine 296, cysteine 301, histidine 303, and cysteine 309 each contribute to the Zn(2+) site.

The protein belongs to the TRAFAC class YlqF/YawG GTPase family. RsgA subfamily. In terms of assembly, monomer. Associates with 30S ribosomal subunit, binds 16S rRNA. Zn(2+) serves as cofactor.

Its subcellular location is the cytoplasm. One of several proteins that assist in the late maturation steps of the functional core of the 30S ribosomal subunit. Helps release RbfA from mature subunits. May play a role in the assembly of ribosomal proteins into the subunit. Circularly permuted GTPase that catalyzes slow GTP hydrolysis, GTPase activity is stimulated by the 30S ribosomal subunit. The sequence is that of Small ribosomal subunit biogenesis GTPase RsgA from Serratia proteamaculans (strain 568).